Here is a 493-residue protein sequence, read N- to C-terminus: Galactose-1-phosphate uridylyltransferase (493 aa).

This sequence belongs to the galactose-1-phosphate uridylyltransferase type 2 family.

It is found in the cytoplasm. The enzyme catalyses alpha-D-galactose 1-phosphate + UDP-alpha-D-glucose = alpha-D-glucose 1-phosphate + UDP-alpha-D-galactose. It participates in carbohydrate metabolism; galactose metabolism. The polypeptide is Galactose-1-phosphate uridylyltransferase (Lactococcus lactis subsp. cremoris (strain SK11)).